The primary structure comprises 177 residues: MRIAITGTPGVGKTTISKVLRDRLGIKVIDITEAVKKYKLYTEKDEDMDSYVIDFEKLEKFIDEIEEKEKTIILDGHVSHLLNPDYIIVLRCNPEIIKERLEKRGYKPKKVLENIQAEILDVCLCESKGKVYEIDTTNRDVENIVDEIIEAIKHKKERKGVVDWTEKYFDYLTLEIK.

Residues Gly10, Gly12, Lys13, Thr14, and Thr15 each coordinate ATP. Residues 30 to 53 (DITEAVKKYKLYTEKDEDMDSYVI) form an NMP region. Residues 103 to 113 (KRGYKPKKVLE) are LID. Arg104 serves as a coordination point for ATP.

It belongs to the adenylate kinase family. AK6 subfamily. Interacts with uS11. Not a structural component of 40S pre-ribosomes, but transiently interacts with them by binding to uS11.

The catalysed reaction is AMP + ATP = 2 ADP. It carries out the reaction ATP + H2O = ADP + phosphate + H(+). Its function is as follows. Broad-specificity nucleoside monophosphate (NMP) kinase that catalyzes the reversible transfer of the terminal phosphate group between nucleoside triphosphates and monophosphates. Also has ATPase activity. Involved in the late maturation steps of the 30S ribosomal particles, specifically 16S rRNA maturation. While NMP activity is not required for ribosome maturation, ATPase activity is. Associates transiently with small ribosomal subunit protein uS11. ATP hydrolysis breaks the interaction with uS11. May temporarily remove uS11 from the ribosome to enable a conformational change of the ribosomal RNA that is needed for the final maturation step of the small ribosomal subunit. The sequence is that of Putative adenylate kinase from Methanocaldococcus jannaschii (strain ATCC 43067 / DSM 2661 / JAL-1 / JCM 10045 / NBRC 100440) (Methanococcus jannaschii).